The chain runs to 107 residues: Age-related maculopathy susceptibility protein 2 (107 aa).

Residues 1-21 are disordered; the sequence is MLRLYPGPMVTEAEGKGGPEM.

As to expression, detected in retina and placenta.

It is found in the cytoplasm. This Homo sapiens (Human) protein is Age-related maculopathy susceptibility protein 2 (ARMS2).